A 302-amino-acid chain; its full sequence is Nucleotide-binding protein STH186 (302 aa).

15 to 22 (GMSGAGKT) is a binding site for ATP. 66-69 (DIRG) serves as a coordination point for GTP.

This sequence belongs to the RapZ-like family.

Its function is as follows. Displays ATPase and GTPase activities. In Symbiobacterium thermophilum (strain DSM 24528 / JCM 14929 / IAM 14863 / T), this protein is Nucleotide-binding protein STH186.